A 613-amino-acid polypeptide reads, in one-letter code: Dihydroxy-acid dehydratase (613 aa).

Residue D81 participates in Mg(2+) binding. Residue C122 participates in [2Fe-2S] cluster binding. Mg(2+)-binding residues include D123 and K124. Position 124 is an N6-carboxylysine (K124). A [2Fe-2S] cluster-binding site is contributed by C195. Mg(2+) is bound at residue E491. S517 functions as the Proton acceptor in the catalytic mechanism.

The protein belongs to the IlvD/Edd family. Homodimer. The cofactor is [2Fe-2S] cluster. Mg(2+) is required as a cofactor.

It carries out the reaction (2R)-2,3-dihydroxy-3-methylbutanoate = 3-methyl-2-oxobutanoate + H2O. It catalyses the reaction (2R,3R)-2,3-dihydroxy-3-methylpentanoate = (S)-3-methyl-2-oxopentanoate + H2O. Its pathway is amino-acid biosynthesis; L-isoleucine biosynthesis; L-isoleucine from 2-oxobutanoate: step 3/4. The protein operates within amino-acid biosynthesis; L-valine biosynthesis; L-valine from pyruvate: step 3/4. Functionally, functions in the biosynthesis of branched-chain amino acids. Catalyzes the dehydration of (2R,3R)-2,3-dihydroxy-3-methylpentanoate (2,3-dihydroxy-3-methylvalerate) into 2-oxo-3-methylpentanoate (2-oxo-3-methylvalerate) and of (2R)-2,3-dihydroxy-3-methylbutanoate (2,3-dihydroxyisovalerate) into 2-oxo-3-methylbutanoate (2-oxoisovalerate), the penultimate precursor to L-isoleucine and L-valine, respectively. This chain is Dihydroxy-acid dehydratase, found in Buchnera aphidicola subsp. Schlechtendalia chinensis.